Reading from the N-terminus, the 189-residue chain is UPF0301 protein PputW619_0469 (189 aa).

It belongs to the UPF0301 (AlgH) family.

This chain is UPF0301 protein PputW619_0469, found in Pseudomonas putida (strain W619).